A 176-amino-acid chain; its full sequence is Translation initiation factor IF-3 (176 aa).

Belongs to the IF-3 family. Monomer.

Its subcellular location is the cytoplasm. Functionally, IF-3 binds to the 30S ribosomal subunit and shifts the equilibrium between 70S ribosomes and their 50S and 30S subunits in favor of the free subunits, thus enhancing the availability of 30S subunits on which protein synthesis initiation begins. This is Translation initiation factor IF-3 from Rippkaea orientalis (strain PCC 8801 / RF-1) (Cyanothece sp. (strain PCC 8801)).